A 230-amino-acid chain; its full sequence is Flagellar L-ring protein (230 aa).

Positions 1–21 are cleaved as a signal peptide; the sequence is MMLKTVLRLPVCAALLALAAG. Cys-22 is lipidated: N-palmitoyl cysteine. The S-diacylglycerol cysteine moiety is linked to residue Cys-22. The tract at residues 34–53 is disordered; the sequence is PLTAPPPPPPQPSARPNGSI. Residues 36–46 show a composition bias toward pro residues; that stretch reads TAPPPPPPQPS.

This sequence belongs to the FlgH family. The basal body constitutes a major portion of the flagellar organelle and consists of four rings (L,P,S, and M) mounted on a central rod.

It is found in the cell outer membrane. It localises to the bacterial flagellum basal body. Its function is as follows. Assembles around the rod to form the L-ring and probably protects the motor/basal body from shearing forces during rotation. This is Flagellar L-ring protein from Bordetella bronchiseptica (strain ATCC BAA-588 / NCTC 13252 / RB50) (Alcaligenes bronchisepticus).